A 419-amino-acid chain; its full sequence is Protein FAM217A (419 aa).

Disordered stretches follow at residues 1-60 (MGRK…LENP), 96-119 (KGST…DLSE), 236-299 (SSSK…SRAL), and 317-382 (KNSK…RTKK). Over residues 7-19 (ESCSSSLHVSSIS) the composition is skewed to low complexity. Positions 236 to 251 (SSSKAIATKAKAPKIP) are enriched in low complexity. Composition is skewed to polar residues over residues 252–261 (ETSTLQTSGV) and 271–281 (NSGSGKPEQNV). 2 stretches are compositionally biased toward low complexity: residues 282–296 (SKWS…KSNS) and 334–345 (PTTTTQATQPMA).

The protein belongs to the FAM217 family.

This chain is Protein FAM217A (Fam217a), found in Mus musculus (Mouse).